A 1255-amino-acid chain; its full sequence is DNA-directed RNA polymerase subunit beta' (1255 aa).

The Zn(2+) site is built by Cys68, Cys70, Cys83, and Cys86. Residues Asp457, Asp459, and Asp461 each coordinate Mg(2+). Positions 803, 885, 892, and 895 each coordinate Zn(2+). A compositionally biased stretch (acidic residues) spans 1220 to 1240 (NSDEEVSFTEDEYFEDEENDL). Residues 1220 to 1255 (NSDEEVSFTEDEYFEDEENDLSTENFDDLKFSEEEE) form a disordered region. Over residues 1246–1255 (DDLKFSEEEE) the composition is skewed to basic and acidic residues.

It belongs to the RNA polymerase beta' chain family. As to quaternary structure, the RNAP catalytic core consists of 2 alpha, 1 beta, 1 beta' and 1 omega subunit. When a sigma factor is associated with the core the holoenzyme is formed, which can initiate transcription. The cofactor is Mg(2+). It depends on Zn(2+) as a cofactor.

The catalysed reaction is RNA(n) + a ribonucleoside 5'-triphosphate = RNA(n+1) + diphosphate. Functionally, DNA-dependent RNA polymerase catalyzes the transcription of DNA into RNA using the four ribonucleoside triphosphates as substrates. In Lachnoclostridium phytofermentans (strain ATCC 700394 / DSM 18823 / ISDg) (Clostridium phytofermentans), this protein is DNA-directed RNA polymerase subunit beta'.